The following is a 398-amino-acid chain: Ras-related GTP-binding protein C (398 aa).

Positions 1–56 (MSLQYGAEETPLAGSYGAADSFPKDFGYGVEEEEEEAAAGGGGGAGAGGGCGPGGA) are disordered. S2 carries the N-acetylserine modification. Phosphoserine is present on residues S2 and S15. Residues 39–55 (AGGGGGAGAGGGCGPGG) are compositionally biased toward gly residues. 6 residues coordinate GDP: R70, S71, G72, K73, S74, and S75. Residue K73 coordinates GTP. Positions 89 and 95 each coordinate GTP. A Phosphothreonine modification is found at T95. Residues H177, K178, D180, and I219 each coordinate GDP. Residue D180 participates in GTP binding.

This sequence belongs to the GTR/RAG GTP-binding protein family. Forms a heterodimer with RRAGA, in a sequence-independent manner, and RRAGB. Heterodimerization stabilizes proteins of the heterodimer. The GDP-bound form of RRAGC (in complex with the GTP-bound form of RRAGA or RRAGB), interacts with RPTOR, thereby promoting recruitment of mTORC1 to the lysosomes. Component of the lysosomal folliculin complex (LFC), composed of FLCN, FNIP1 (or FNIP2), RagA/RRAGA or RagB/RRAGB GDP-bound, RagC/RRAGC or RagD/RRAGD GTP-bound, and Ragulator. Interacts with NOL8. Interacts with SH3BP4; the interaction with this negative regulator is most probably direct, preferentially occurs with the inactive GDP-bound form of RRAGB, is negatively regulated by amino acids and prevents interaction with RPTOR. The Rag heterodimer interacts with SLC38A9; the probable amino acid sensor. Interacts with SESN1, SESN2 and SESN3. Interacts with PIP4P1. The GDP-bound form interacts with TFEB. The GDP-bound form interacts with TFE3. As to expression, expressed most abundantly in kidney. Moderately expressed in brain, ovary, and testis, and detected at lower levels in heart, liver, and muscle. Not detected in lung, spleen, and small intestine. Widely expressed in tumor cells, with expression being specifically up-regulated in highly metastatic cells.

The protein localises to the cytoplasm. It localises to the nucleus. The protein resides in the lysosome membrane. The enzyme catalyses GTP + H2O = GDP + phosphate + H(+). With respect to regulation, the activation of RagC/RRAGC is mediated by a GTPase activating protein (GAP). In high-amino acid conditions, activated by GTPase activating protein FLCN that stimulates RRAGC GTPase activity to turn it into its active GDP-bound form. In response to amino acid depletion, the GATOR1 complex inactivates RagC/RRAGC by securing the GTP-bound inactive form. Guanine nucleotide-binding protein that plays a crucial role in the cellular response to amino acid availability through regulation of the mTORC1 signaling cascade. Forms heterodimeric Rag complexes with RagA/RRAGA or RagB/RRAGB and cycles between an inactive GTP-bound and an active GDP-bound form: RagC/RRAGC is in its active form when GDP-bound RagC/RRAGC forms a complex with GTP-bound RagA/RRAGA (or RagB/RRAGB) and in an inactive form when GTP-bound RagC/RRAGC heterodimerizes with GDP-bound RagA/RRAGA (or RagB/RRAGB). In its GDP-bound active form, promotes the recruitment of mTORC1 to the lysosomes and its subsequent activation by the GTPase RHEB. This is a crucial step in the activation of the MTOR signaling cascade by amino acids. Also plays a central role in the non-canonical mTORC1 complex, which acts independently of RHEB and specifically mediates phosphorylation of MiT/TFE factors TFEB and TFE3: GDP-bound RagC/RRAGC mediates recruitment of MiT/TFE factors TFEB and TFE3. The protein is Ras-related GTP-binding protein C of Mus musculus (Mouse).